The primary structure comprises 449 residues: UDP-N-acetylmuramate--L-alanine ligase (449 aa).

Glycine 121–serine 127 serves as a coordination point for ATP.

This sequence belongs to the MurCDEF family.

The protein localises to the cytoplasm. It catalyses the reaction UDP-N-acetyl-alpha-D-muramate + L-alanine + ATP = UDP-N-acetyl-alpha-D-muramoyl-L-alanine + ADP + phosphate + H(+). Its pathway is cell wall biogenesis; peptidoglycan biosynthesis. Functionally, cell wall formation. This chain is UDP-N-acetylmuramate--L-alanine ligase, found in Helicobacter pylori (strain P12).